The sequence spans 336 residues: Cinnamoyl-CoA reductase 2 (336 aa).

NADP(+) contacts are provided by residues 21 to 27 (GAGGFIA), R46, K52, 72 to 73 (DL), 92 to 94 (TAS), Y165, K169, 192 to 195 (PVVV), and S207. A disulfide bridge links C158 with C166. Residue K169 is the Proton donor of the active site.

This sequence belongs to the NAD(P)-dependent epimerase/dehydratase family. Dihydroflavonol-4-reductase subfamily. In terms of processing, the formation of a reversible disulfide bond reduces activity by perturbing the positioning of nearby catalytic residues. Mainly expressed in roots and stems, especially at the second internode and, to a lower extent, in leaves and flowers. Localized in vascular elements, with weaker expression in the interfascicular (xylem fiber) region.

The protein localises to the cytoplasm. It carries out the reaction (E)-coniferaldehyde + NADP(+) + CoA = (E)-feruloyl-CoA + NADPH + H(+). The catalysed reaction is (E)-4-coumaraldehyde + NADP(+) + CoA = (E)-4-coumaroyl-CoA + NADPH + H(+). The enzyme catalyses (E)-sinapaldehyde + NADP(+) + CoA = (E)-sinapoyl-CoA + NADPH + H(+). It catalyses the reaction (E)-cinnamaldehyde + NADP(+) + CoA = (E)-cinnamoyl-CoA + NADPH + H(+). It carries out the reaction (E)-caffeyl aldehyde + NADP(+) + CoA = (E)-caffeoyl-CoA + NADPH + H(+). It participates in aromatic compound metabolism; phenylpropanoid biosynthesis. Functionally, involved in the latter stages of lignin biosynthesis. Catalyzes one of the last steps of monolignol biosynthesis, the conversion of cinnamoyl-CoAs into their corresponding cinnamaldehydes. Mediates the conversion of caffeoyl-CoA and coumaroyl-CoA to caffaldehyde and coumaraldehyde, respectively. Also active, with a lower efficiency, toward feruloyl-CoA and sinapoyl-CoA. Involved in the production of floral volatile phenylpropanoids in flowers of fragrant cultivars from cinnamic acid, a common precursor with the anthocyanin biosynthesis pathway involved in flower pigmentation. The polypeptide is Cinnamoyl-CoA reductase 2 (Medicago truncatula (Barrel medic)).